The sequence spans 270 residues: MHYYRYSNAKVSCWYKYLLFSYNIIFWLAGVVFLGVGLWAWSEKGVLSDLTKVTRMHGIDPVVLVLMVGVVMFTLGFAGCVGALRENICLLNFFCGTIVLIFFLELAVAVLAFLFQDWVRDRFREFFESNIKSYRDDIDLQNLIDSLQKANQCCGAYGPEDWDLNVYFNCSGASYSREKCGVPFSCCVPDPAQKVVNTQCGYDVRIQLKSKWDESIFTKGCIQALESWLPRNIYIVAGVFIAISLLQIFGIFLARTLISDIEAVKAGHHF.

Topologically, residues methionine 1–tyrosine 17 are cytoplasmic. Residues leucine 18–leucine 38 traverse the membrane as a helical segment. Residues tryptophan 39 to proline 61 lie on the Extracellular side of the membrane. The chain crosses the membrane as a helical span at residues valine 62–glycine 82. The Cytoplasmic segment spans residues alanine 83–asparagine 92. A helical transmembrane segment spans residues phenylalanine 93–phenylalanine 113. The Extracellular segment spans residues leucine 114–asparagine 232. The necessary and sufficient for interaction with ADAM10 stretch occupies residues leucine 114–asparagine 232. 4 cysteine pairs are disulfide-bonded: cysteine 153–cysteine 221, cysteine 154–cysteine 186, cysteine 170–cysteine 180, and cysteine 187–cysteine 200. N-linked (GlcNAc...) asparagine glycosylation occurs at asparagine 169. A helical membrane pass occupies residues isoleucine 233–leucine 253. The Cytoplasmic portion of the chain corresponds to alanine 254–phenylalanine 270.

Belongs to the tetraspanin (TM4SF) family. Interacts with ADAM10; the interaction promotes ADAM10 maturation and cell surface expression.

The protein resides in the cell membrane. Part of TspanC8 subgroup, composed of 6 members that interact with the transmembrane metalloprotease ADAM10. This interaction is required for ADAM10 exit from the endoplasmic reticulum and for enzymatic maturation and trafficking to the cell surface as well as substrate specificity. Different TspanC8/ADAM10 complexes have distinct substrates. Negatively regulates ADAM10-mediated cleavage of GP6. Promotes ADAM10-mediated cleavage of CDH5. The polypeptide is Tetraspanin-14 (Homo sapiens (Human)).